Reading from the N-terminus, the 420-residue chain is COP9 signalosome complex subunit 11 (420 aa).

The PCI domain occupies 177 to 346 (SIHEHPSLVD…VYYKEDLPVG (170 aa)). Residues 386-420 (VEPLNRSQDMDAFELHEQSEDEEYEEEHLEEGENV) form a disordered region. A compositionally biased stretch (acidic residues) spans 404 to 420 (SEDEEYEEEHLEEGENV).

Component of a COP9 signalosome-like (CSN) complex.

Its subcellular location is the cytoplasm. It is found in the nucleus. Its function is as follows. Component of the COP9 signalosome (CSN) complex that acts as an regulator of the ubiquitin (Ubl) conjugation pathway by mediating the deneddylation of the cullin subunit of SCF-type E3 ubiquitin-protein ligase complexes The CSN complex is involved in the regulation of the mating pheromone response. PCI8 may also be involved in transcriptional and translational control. This is COP9 signalosome complex subunit 11 (PCI8) from Eremothecium gossypii (strain ATCC 10895 / CBS 109.51 / FGSC 9923 / NRRL Y-1056) (Yeast).